The primary structure comprises 45 residues: Photosystem II reaction center protein K (45 aa).

The propeptide occupies 1–8 (MEAVFLLA). The chain crosses the membrane as a helical span at residues 24–44 (LPVIPVFFLALAFVWQAAVGF).

Belongs to the PsbK family. PSII is composed of 1 copy each of membrane proteins PsbA, PsbB, PsbC, PsbD, PsbE, PsbF, PsbH, PsbI, PsbJ, PsbK, PsbL, PsbM, PsbT, PsbX, PsbY, PsbZ, Psb30/Ycf12, peripheral proteins PsbO, CyanoQ (PsbQ), PsbU, PsbV and a large number of cofactors. It forms dimeric complexes.

It is found in the cellular thylakoid membrane. Its function is as follows. One of the components of the core complex of photosystem II (PSII). PSII is a light-driven water:plastoquinone oxidoreductase that uses light energy to abstract electrons from H(2)O, generating O(2) and a proton gradient subsequently used for ATP formation. It consists of a core antenna complex that captures photons, and an electron transfer chain that converts photonic excitation into a charge separation. In Crocosphaera subtropica (strain ATCC 51142 / BH68) (Cyanothece sp. (strain ATCC 51142)), this protein is Photosystem II reaction center protein K.